The following is a 234-amino-acid chain: Phosphoribosylaminoimidazole-succinocarboxamide synthase (234 aa).

This sequence belongs to the SAICAR synthetase family.

It catalyses the reaction 5-amino-1-(5-phospho-D-ribosyl)imidazole-4-carboxylate + L-aspartate + ATP = (2S)-2-[5-amino-1-(5-phospho-beta-D-ribosyl)imidazole-4-carboxamido]succinate + ADP + phosphate + 2 H(+). It participates in purine metabolism; IMP biosynthesis via de novo pathway; 5-amino-1-(5-phospho-D-ribosyl)imidazole-4-carboxamide from 5-amino-1-(5-phospho-D-ribosyl)imidazole-4-carboxylate: step 1/2. The chain is Phosphoribosylaminoimidazole-succinocarboxamide synthase from Clostridium botulinum (strain ATCC 19397 / Type A).